The following is a 519-amino-acid chain: Cytochrome P450 monooxygenase easM (519 aa).

A helical membrane pass occupies residues 16 to 33 (VAPALFASSISVLFLILS). N50 and N353 each carry an N-linked (GlcNAc...) asparagine glycan. Residue C458 coordinates heme.

Belongs to the cytochrome P450 family. The cofactor is heme.

It is found in the membrane. It functions in the pathway alkaloid biosynthesis; ergot alkaloid biosynthesis. Functionally, cytochrome P450 monooxygenase; part of the gene cluster that mediates the biosynthesis of fumiclavanine C, a fungal ergot alkaloid. DmaW catalyzes the first step of ergot alkaloid biosynthesis by condensing dimethylallyl diphosphate (DMAP) and tryptophan to form 4-dimethylallyl-L-tryptophan. The second step is catalyzed by the methyltransferase easF that methylates 4-dimethylallyl-L-tryptophan in the presence of S-adenosyl-L-methionine, resulting in the formation of 4-dimethylallyl-L-abrine. The catalase easC and the FAD-dependent oxidoreductase easE then transform 4-dimethylallyl-L-abrine to chanoclavine-I which is further oxidized by EasD in the presence of NAD(+), resulting in the formation of chanoclavine-I aldehyde. EasA reduces chanoclavine-I aldehyde to dihydrochanoclavine-I aldehyde that spontaneously dehydrates to form 6,8-dimethyl-6,7-didehydroergoline. EasG then catalyzes the reduction of 6,8-dimethyl-6,7-didehydroergoline to form festuclavine. Hydrolysis of festuclavine by easM then leads to the formation of fumigaclavine B which is in turn acetylated by easN to fumigaclavine A. Finally, easL catalyzes the conversion of fumigaclavine A into fumigaclavine C by attaching a dimethylallyl moiety to C-2 of the indole nucleus. This Aspergillus fumigatus (strain ATCC MYA-4609 / CBS 101355 / FGSC A1100 / Af293) (Neosartorya fumigata) protein is Cytochrome P450 monooxygenase easM.